The chain runs to 447 residues: Serine/threonine-protein phosphatase 2A 55 kDa regulatory subunit B gamma isoform (447 aa).

WD repeat units follow at residues 22–61 (TEAD…KNAP), 87–128 (EIEE…KRPE), 171–209 (GHTY…RSFN), 220–260 (DLTE…LCDK), 279–317 (EIIS…RPIE), 334–375 (ENDC…DVTL), and 410–446 (DFTK…NSDV).

It belongs to the phosphatase 2A regulatory subunit B family. As to quaternary structure, PP2A consists of a common heterodimeric core enzyme, composed of a 36 kDa catalytic subunit (subunit C) and a 65 kDa constant regulatory subunit (PR65 or subunit A), that associates with a variety of regulatory subunits. Proteins that associate with the core dimer include three families of regulatory subunits B (the R2/B/PR55/B55, R3/B''/PR72/PR130/PR59 and R5/B'/B56 families), the 48 kDa variable regulatory subunit, viral proteins, and cell signaling molecules. Interacts with IER5. As to expression, highly expressed in brain.

Its function is as follows. The B regulatory subunit might modulate substrate selectivity and catalytic activity, and might also direct the localization of the catalytic enzyme to a particular subcellular compartment. This Oryctolagus cuniculus (Rabbit) protein is Serine/threonine-protein phosphatase 2A 55 kDa regulatory subunit B gamma isoform (PPP2R2C).